The primary structure comprises 205 residues: Guanylate kinase (205 aa).

The region spanning 18–196 is the Guanylate kinase-like domain; it reads PKLFIISAPA…AYQVLRSIFI (179 aa). 25–32 provides a ligand contact to ATP; it reads APAGAGKT.

This sequence belongs to the guanylate kinase family.

It localises to the cytoplasm. It carries out the reaction GMP + ATP = GDP + ADP. Functionally, essential for recycling GMP and indirectly, cGMP. The protein is Guanylate kinase (gmk) of Chlamydia trachomatis serovar D (strain ATCC VR-885 / DSM 19411 / UW-3/Cx).